We begin with the raw amino-acid sequence, 100 residues long: Large ribosomal subunit protein uL23 (100 aa).

Belongs to the universal ribosomal protein uL23 family. In terms of assembly, part of the 50S ribosomal subunit. Contacts protein L29, and trigger factor when it is bound to the ribosome.

In terms of biological role, one of the early assembly proteins it binds 23S rRNA. One of the proteins that surrounds the polypeptide exit tunnel on the outside of the ribosome. Forms the main docking site for trigger factor binding to the ribosome. This is Large ribosomal subunit protein uL23 from Thermotoga neapolitana (strain ATCC 49049 / DSM 4359 / NBRC 107923 / NS-E).